The primary structure comprises 250 residues: Insertion sequence IS232 putative ATP-binding protein (250 aa).

Position 108–115 (108–115 (GPSGVGKT)) interacts with ATP.

It belongs to the IS21/IS1162 putative ATP-binding protein family.

The protein is Insertion sequence IS232 putative ATP-binding protein of Bacillus thuringiensis subsp. berliner.